The primary structure comprises 446 residues: Nitrate/nitrite binding protein NrtA (446 aa).

A signal peptide spans 1–28 (MSNFSRSTRRKFMFTAGAAAIGGVVLHG). The N-palmitoyl cysteine moiety is linked to residue cysteine 29. Cysteine 29 carries the S-diacylglycerol cysteine lipid modification. The nitrate site is built by tryptophan 102, glutamine 155, histidine 196, glycine 240, and lysine 269.

Belongs to the CmpA/NrtA family. As to quaternary structure, the complex is composed of two ATP-binding proteins (NrtC and NrtD), two transmembrane proteins (NrtB) and a solute-binding protein (NrtA).

It localises to the cell inner membrane. Its function is as follows. Part of the ABC transporter complex NrtABCD involved in nitrate uptake. The complex is probably also involved in nitrite transport. NrtA is the substrate-binding protein. Binds nitrate. This Synechocystis sp. (strain ATCC 27184 / PCC 6803 / Kazusa) protein is Nitrate/nitrite binding protein NrtA.